A 439-amino-acid chain; its full sequence is CBL-interacting serine/threonine-protein kinase 26 (439 aa).

A Protein kinase domain is found at 13 to 268 (YEVGKTLGQG…IPEVLGDAWF (256 aa)). ATP is bound by residues 19–27 (LGQGTFAKV) and Lys42. The active-site Proton acceptor is Asp136. The interval 154–183 (DFGLSALSRQVRGDGLLHTACGTPNYAAPE) is activation loop. Phosphoserine is present on Ser158. Thr172 bears the Phosphothreonine mark. The NAF domain maps to 306 to 330 (EQPTSMNAFELISMSRALDLGNLFE). The PPI stretch occupies residues 336-365 (KRETRFAAKGAANDLVQKIEEASKPLGFDI).

This sequence belongs to the protein kinase superfamily. CAMK Ser/Thr protein kinase family. SNF1 subfamily. In terms of assembly, interacts with RBOHF (via N-terminus). Requires Mn(2+) as cofactor.

It is found in the cell membrane. It carries out the reaction L-seryl-[protein] + ATP = O-phospho-L-seryl-[protein] + ADP + H(+). The enzyme catalyses L-threonyl-[protein] + ATP = O-phospho-L-threonyl-[protein] + ADP + H(+). In terms of biological role, CIPK serine-threonine protein kinases interact with CBL proteins. Binding of a CBL protein to the regulatory NAF domain of CIPK protein lead to the activation of the kinase in a calcium-dependent manner. Involved in the calcium-dependent regulation of reactive oxygen species production by the NADPH oxidase RBOHF. The polypeptide is CBL-interacting serine/threonine-protein kinase 26 (CIPK26) (Arabidopsis thaliana (Mouse-ear cress)).